The following is an 88-amino-acid chain: Small ribosomal subunit protein uS17 (88 aa).

This sequence belongs to the universal ribosomal protein uS17 family. Part of the 30S ribosomal subunit.

In terms of biological role, one of the primary rRNA binding proteins, it binds specifically to the 5'-end of 16S ribosomal RNA. The sequence is that of Small ribosomal subunit protein uS17 from Lawsonia intracellularis (strain PHE/MN1-00).